Here is an 87-residue protein sequence, read N- to C-terminus: RNA-binding protein Hfq (87 aa).

One can recognise a Sm domain in the interval 9-68; sequence DPFLNALRRERIPVSIFLVNGIKLQGKIQSFDQFVILLENTVNQMVYKHAISTVVPARAV.

Belongs to the Hfq family. In terms of assembly, homohexamer.

RNA chaperone that binds small regulatory RNA (sRNAs) and mRNAs to facilitate mRNA translational regulation in response to envelope stress, environmental stress and changes in metabolite concentrations. Also binds with high specificity to tRNAs. The polypeptide is RNA-binding protein Hfq (Pseudoalteromonas translucida (strain TAC 125)).